The sequence spans 310 residues: Leucine carboxyl methyltransferase 1 (310 aa).

S-adenosyl-L-methionine-binding positions include Arg50, Gly75, Asp100, 145–146 (DI), and Glu169.

It belongs to the methyltransferase superfamily. LCMT family.

It carries out the reaction [phosphatase 2A protein]-C-terminal L-leucine + S-adenosyl-L-methionine = [phosphatase 2A protein]-C-terminal L-leucine methyl ester + S-adenosyl-L-homocysteine. Functionally, methylates the carboxyl group of the C-terminal leucine residue of protein phosphatase 2A catalytic subunits to form alpha-leucine ester residues. The polypeptide is Leucine carboxyl methyltransferase 1 (ppm1) (Schizosaccharomyces pombe (strain 972 / ATCC 24843) (Fission yeast)).